Here is a 70-residue protein sequence, read N- to C-terminus: U2-agatoxin-Ao1b (70 aa).

The signal sequence occupies residues 1 to 20 (MRAIISLILISAMVFSMIAA). A propeptide spanning residues 21 to 34 (VPEEEGLQLSEDER) is cleaved from the precursor. 3 cysteine pairs are disulfide-bonded: Cys-37–Cys-53, Cys-44–Cys-58, and Cys-52–Cys-68. Leucine amide is present on Leu-69.

The protein belongs to the neurotoxin 01 (U2-agtx) family. In terms of tissue distribution, expressed by the venom gland.

It localises to the secreted. Its function is as follows. Insect active toxin causing rapid but reversible paralysis in crickets. No activity shown in mammals. Does not show effect on mammalian voltage-gated calcium channels. This Agelena orientalis (Funnel-web spider) protein is U2-agatoxin-Ao1b.